The sequence spans 361 residues: Tetrathionate reductase subunit C (361 aa).

9 helical membrane-spanning segments follow: residues 26-46 (FSYALLISGADLLLLAALALL), 53-73 (AIPMFLILGLSFFSVILLGPL), 104-124 (ALYGGLLWPLTFIVALIFALL), 160-180 (LAAILVPLSALWTIYPGMLFF), 193-213 (LMLPMFFGETFITATGTALIL), 233-253 (GAAAIALAGVLILQMFIWGMW), 258-278 (FAAVVPMMQAAAVIFLLTFIL), 288-308 (ITPIVPVLALFGVVVNKWNLI), and 334-354 (AVSPIALAILLLVILSYIFPM).

The protein belongs to the NrfD family. In terms of assembly, probably composed of three subunits: TtrA, TtrB and TtrC.

It localises to the cell membrane. In terms of biological role, part of a membrane-bound tetrathionate reductase that catalyzes the reduction of tetrathionate to thiosulfate. TtrC probably anchors TtrA and TtrB to the external face of the cytoplasmic membrane. May transfer electrons from membrane quinol to TtrB. This chain is Tetrathionate reductase subunit C (ttrC), found in Archaeoglobus fulgidus (strain ATCC 49558 / DSM 4304 / JCM 9628 / NBRC 100126 / VC-16).